The sequence spans 171 residues: uncharacterized protein (171 aa).

A disordered region spans residues cysteine 123–histidine 171. A compositionally biased stretch (basic and acidic residues) spans aspartate 140–histidine 171.

This is an uncharacterized protein from Caenorhabditis elegans.